A 463-amino-acid polypeptide reads, in one-letter code: Retinoic acid receptor RXR-gamma (463 aa).

The tract at residues 1-138 (MYGNYSHFMK…TSPGSLVKHI (138 aa)) is modulating. The segment at 16–53 (GGSPGHTGSTSMSPSVALPTGKPMDSHPSYTDTPVSAP) is disordered. NR C4-type zinc fingers lie at residues 139–159 (CAICGDRSSGKHYGVYSCEGC) and 175–199 (CRDNKDCLIDKRQRNRCQYCRYQKC). The nuclear receptor DNA-binding region spans 139–204 (CAICGDRSSG…RYQKCLVMGM (66 aa)). Residues 205–230 (KREAVQEERQRSRERAESEAECASSS) are hinge. The segment covering 211–222 (EERQRSRERAES) has biased composition (basic and acidic residues). The tract at residues 211–232 (EERQRSRERAESEAECASSSHE) is disordered. The region spanning 231–459 (HEDMPVERIL…SFLMEMLETP (229 aa)) is the NR LBD domain.

It belongs to the nuclear hormone receptor family. NR2 subfamily. Homodimer. Heterodimer with a RAR molecule. Binds DNA preferentially as a RAR/RXR heterodimer. Interacts with RARA. Post-translationally, acetylated by EP300.

It is found in the nucleus. The protein resides in the cytoplasm. Its function is as follows. Receptor for retinoic acid. Retinoic acid receptors bind as heterodimers to their target response elements in response to their ligands, all-trans or 9-cis retinoic acid, and regulate gene expression in various biological processes. The RAR/RXR heterodimers bind to the retinoic acid response elements (RARE) composed of tandem 5'-AGGTCA-3' sites known as DR1-DR5. The high affinity ligand for RXRs is 9-cis retinoic acid. This is Retinoic acid receptor RXR-gamma (Rxrg) from Mus musculus (Mouse).